Consider the following 415-residue polypeptide: Multifunctional CCA protein (415 aa).

2 residues coordinate ATP: Gly-8 and Arg-11. CTP-binding residues include Gly-8 and Arg-11. Mg(2+)-binding residues include Asp-21 and Asp-23. Residues Arg-91, Arg-143, and Arg-146 each coordinate ATP. The CTP site is built by Arg-91, Arg-143, and Arg-146. The region spanning 232–333 is the HD domain; it reads TGVHVMMVID…VRLLERCDAL (102 aa).

The protein belongs to the tRNA nucleotidyltransferase/poly(A) polymerase family. Bacterial CCA-adding enzyme type 1 subfamily. Monomer. Can also form homodimers and oligomers. The cofactor is Mg(2+). Requires Ni(2+) as cofactor.

The catalysed reaction is a tRNA precursor + 2 CTP + ATP = a tRNA with a 3' CCA end + 3 diphosphate. The enzyme catalyses a tRNA with a 3' CCA end + 2 CTP + ATP = a tRNA with a 3' CCACCA end + 3 diphosphate. Catalyzes the addition and repair of the essential 3'-terminal CCA sequence in tRNAs without using a nucleic acid template. Adds these three nucleotides in the order of C, C, and A to the tRNA nucleotide-73, using CTP and ATP as substrates and producing inorganic pyrophosphate. tRNA 3'-terminal CCA addition is required both for tRNA processing and repair. Also involved in tRNA surveillance by mediating tandem CCA addition to generate a CCACCA at the 3' terminus of unstable tRNAs. While stable tRNAs receive only 3'-terminal CCA, unstable tRNAs are marked with CCACCA and rapidly degraded. The chain is Multifunctional CCA protein from Cupriavidus taiwanensis (strain DSM 17343 / BCRC 17206 / CCUG 44338 / CIP 107171 / LMG 19424 / R1) (Ralstonia taiwanensis (strain LMG 19424)).